The primary structure comprises 51 residues: Large ribosomal subunit protein bL33 (51 aa).

Residues 1–23 (MREKIKLESSAGTGHFYTTTKNK) are disordered. Positions 10–20 (SAGTGHFYTTT) are enriched in polar residues.

Belongs to the bacterial ribosomal protein bL33 family.

The protein is Large ribosomal subunit protein bL33 of Methylobacillus flagellatus (strain ATCC 51484 / DSM 6875 / VKM B-1610 / KT).